The following is a 105-amino-acid chain: MESSEVLQEIREVNLAYLLLAQRLVRENQVEAMFRLGVSKEIADILAKLTSAQLVKLAASNMVLCRFRFDDHALLSTLTHTAKNHDMQQMHAAILLARQPVESLN.

This sequence belongs to the FlhD family. In terms of assembly, homodimer; disulfide-linked. Forms a heterohexamer composed of two FlhC and four FlhD subunits. Each FlhC binds a FlhD dimer, forming a heterotrimer, and a hexamer assembles by dimerization of two heterotrimers.

It is found in the cytoplasm. Its function is as follows. Functions in complex with FlhC as a master transcriptional regulator that regulates transcription of several flagellar and non-flagellar operons by binding to their promoter region. Activates expression of class 2 flagellar genes, including fliA, which is a flagellum-specific sigma factor that turns on the class 3 genes. Also regulates genes whose products function in a variety of physiological pathways. The chain is Flagellar transcriptional regulator FlhD from Cupriavidus pinatubonensis (strain JMP 134 / LMG 1197) (Cupriavidus necator (strain JMP 134)).